A 931-amino-acid polypeptide reads, in one-letter code: Protein translocase subunit SecA (931 aa).

ATP-binding positions include Q87, 105 to 109 (GEGKT), and D515. Residues C915, C917, C926, and H927 each contribute to the Zn(2+) site.

It belongs to the SecA family. In terms of assembly, monomer and homodimer. Part of the essential Sec protein translocation apparatus which comprises SecA, SecYEG and auxiliary proteins SecDF-YajC and YidC. Zn(2+) is required as a cofactor.

The protein resides in the cell inner membrane. Its subcellular location is the cytoplasm. The enzyme catalyses ATP + H2O + cellular proteinSide 1 = ADP + phosphate + cellular proteinSide 2.. Its function is as follows. Part of the Sec protein translocase complex. Interacts with the SecYEG preprotein conducting channel. Has a central role in coupling the hydrolysis of ATP to the transfer of proteins into and across the cell membrane, serving both as a receptor for the preprotein-SecB complex and as an ATP-driven molecular motor driving the stepwise translocation of polypeptide chains across the membrane. This Burkholderia pseudomallei (strain 1106a) protein is Protein translocase subunit SecA.